Reading from the N-terminus, the 500-residue chain is Metal transporter Nramp3.1 (500 aa).

12 helical membrane-spanning segments follow: residues 51 to 71 (LWLF…PGNL), 79 to 99 (AIAG…GLLV), 128 to 148 (MILW…EVIG), 160 to 180 (VLPL…FLFL), 188 to 208 (LEAA…WMFA), 234 to 254 (AVGV…SALV), 280 to 300 (AALA…AKGF), 322 to 342 (YGGG…AAGQ), 370 to 390 (ALIT…VFDT), 401 to 421 (WLNM…LCLV), 439 to 459 (VSWL…LDFF), and 467 to 487 (VFTT…IYLI).

This sequence belongs to the NRAMP (TC 2.A.55) family. Expressed in roots, stems, buds and leaves.

Its subcellular location is the golgi apparatus. The protein localises to the trans-Golgi network membrane. It catalyses the reaction Mn(2+)(in) = Mn(2+)(out). The enzyme catalyses Fe(2+)(in) = Fe(2+)(out). In terms of biological role, divalent metal transporter. Can transport manganese (Mn) and iron (Fe). Involved in the control of cell-to-cell transport of manganese (Mn) between organs and tissues to monitor Mn homeostasis. This is Metal transporter Nramp3.1 from Populus trichocarpa (Western balsam poplar).